The primary structure comprises 45 residues: Large ribosomal subunit protein bL34 (45 aa).

The interval Met-1 to Val-45 is disordered. Basic residues predominate over residues Ser-10–Val-45.

This sequence belongs to the bacterial ribosomal protein bL34 family.

This is Large ribosomal subunit protein bL34 from Prochlorococcus marinus (strain MIT 9515).